The sequence spans 440 residues: MVMTRRIFFSWFIVICSLWLSSFSSVHAKLKGTISSADFNPIPIAITDFVSNDSIGLKIAAVVTADLERSGLFLPLDKASFFEKISNPNSQPHFFHWQKIRAQGLVTGQVIRENDGRLRVDFRLWDVFGHQQLKGRRFYTATERWRRVAHMIADEIYSEMTGESGYFDTRIVFIDETGPQNARIKRLAIMDQDGANLIYISDGSELVLTPRFSPKRQEITYMAYERNQPPHVYLQQIEMGQRELIGTFKNMTIAPRFSSDGQKVIMSLLQNNGSANLYTMDLRTRMMTRLTTTSAIDTSASYSPDGTQIVFSSDRSGKPQIYTMNADGSNLQRISANEGSYSTPIWSPRGDYIAFTKQLEGQFSIGVMRPDGKGERILTTGFHNEGPTWAPNGRVLMFFRKNPGMGPKIYTIDITGRNERQLPTPNDASDPAWSPLLNMQ.

The N-terminal stretch at 1–28 (MVMTRRIFFSWFIVICSLWLSSFSSVHA) is a signal peptide. Residues 417–440 (RNERQLPTPNDASDPAWSPLLNMQ) form a disordered region.

This sequence belongs to the TolB family. In terms of assembly, the Tol-Pal system is composed of five core proteins: the inner membrane proteins TolA, TolQ and TolR, the periplasmic protein TolB and the outer membrane protein Pal. They form a network linking the inner and outer membranes and the peptidoglycan layer.

It is found in the periplasm. In terms of biological role, part of the Tol-Pal system, which plays a role in outer membrane invagination during cell division and is important for maintaining outer membrane integrity. This Bartonella quintana (strain Toulouse) (Rochalimaea quintana) protein is Tol-Pal system protein TolB.